The chain runs to 358 residues: MRKIIHIDMDCYFAAVEMRDFPEYRGKPLAVGGSSDRRGVISTCSYEARKFGVRSAMATAYAFKLCPDLILVPGRMQVYKDVSLQIREIFSRYTQLIEPLSLDEAYLDVSECQQYKGSATLIAQAIRRDILAETGLTASAGIAPVKFLAKVASDLNKPNGQYVITPETLPEFVKTLSLRKIPGVGKVTAEKLSSLGLNTCGDVQAYSKPELLARFGKFGGVLIERSQGIDERGISADRERKSVGVETTLAKDIYSLEQCQQVMPGLIQELALRLSRSAKERKIHKQVVKLKFNDFKQTTIEHRSDEVSIVMFYDLLAQAMARQEGRGIRLLGISVGLADSILAVPEIPNAQTQLDLAL.

The 182-residue stretch at 4 to 185 folds into the UmuC domain; that stretch reads IIHIDMDCYF…LSLRKIPGVG (182 aa). Mg(2+) is bound by residues D8 and D103. The active site involves E104.

This sequence belongs to the DNA polymerase type-Y family. As to quaternary structure, monomer. Mg(2+) is required as a cofactor.

It localises to the cytoplasm. It catalyses the reaction DNA(n) + a 2'-deoxyribonucleoside 5'-triphosphate = DNA(n+1) + diphosphate. Its function is as follows. Poorly processive, error-prone DNA polymerase involved in untargeted mutagenesis. Copies undamaged DNA at stalled replication forks, which arise in vivo from mismatched or misaligned primer ends. These misaligned primers can be extended by PolIV. Exhibits no 3'-5' exonuclease (proofreading) activity. May be involved in translesional synthesis, in conjunction with the beta clamp from PolIII. This is DNA polymerase IV from Shewanella baltica (strain OS185).